The chain runs to 265 residues: MRVERVLLKDYTTLGVGGPAELWTVETREELKRATEAPYRVLGNGSNLLVLDEGVPERVIRLAGEFQTYDLKGWVGAGTLLPLLVQEAARAGLSGLEGLLGIPAQVGGAVKMNAGTRFGEMADALEAVEVFHDGAFHVYCPEELGFGYRKSHLPPGGIVTRVRLKLKERPKEEILRRMAEVDRARKGQPKRKSAGCAFKNPPGQSAGRLIDERGLKGLRVGDAMISLEHGNFIVNLGQARAKDVLELVRRVQEELPLELEWEVWP.

The FAD-binding PCMH-type domain maps to 15–169 (GVGGPAELWT…TRVRLKLKER (155 aa)). Arginine 149 is a catalytic residue. A disordered region spans residues 182–203 (DRARKGQPKRKSAGCAFKNPPG). The active-site Proton donor is the cysteine 196.

This sequence belongs to the MurB family. The cofactor is FAD.

The protein resides in the cytoplasm. The enzyme catalyses UDP-N-acetyl-alpha-D-muramate + NADP(+) = UDP-N-acetyl-3-O-(1-carboxyvinyl)-alpha-D-glucosamine + NADPH + H(+). It functions in the pathway cell wall biogenesis; peptidoglycan biosynthesis. Functionally, cell wall formation. The chain is UDP-N-acetylenolpyruvoylglucosamine reductase from Thermus thermophilus (strain ATCC 27634 / DSM 579 / HB8).